The sequence spans 328 residues: Probable cell division protein WhiA (328 aa).

The H-T-H motif DNA-binding region spans 275–308; that stretch reads SLEELGQLASPPMTKDAVAGRIRRLLSMADKRAE.

The protein belongs to the WhiA family.

Involved in cell division and chromosome segregation. This is Probable cell division protein WhiA from Corynebacterium urealyticum (strain ATCC 43042 / DSM 7109).